The chain runs to 206 residues: High frequency lysogenization protein HflD homolog (206 aa).

Belongs to the HflD family.

The protein localises to the cytoplasm. It is found in the cell inner membrane. This chain is High frequency lysogenization protein HflD homolog, found in Idiomarina loihiensis (strain ATCC BAA-735 / DSM 15497 / L2-TR).